Here is a 173-residue protein sequence, read N- to C-terminus: Flagellar assembly factor FliW (173 aa).

Residues 152–173 (STTVRRKASPPAAGEDKGDVQE) form a disordered region.

Belongs to the FliW family. In terms of assembly, interacts with translational regulator CsrA and flagellin(s).

The protein localises to the cytoplasm. In terms of biological role, acts as an anti-CsrA protein, binds CsrA and prevents it from repressing translation of its target genes, one of which is flagellin. Binds to flagellin and participates in the assembly of the flagellum. This chain is Flagellar assembly factor FliW, found in Nitratidesulfovibrio vulgaris (strain ATCC 29579 / DSM 644 / CCUG 34227 / NCIMB 8303 / VKM B-1760 / Hildenborough) (Desulfovibrio vulgaris).